The chain runs to 267 residues: Nanos homolog 1 (267 aa).

An essential for its translational repressor activity region spans residues 40-56 (FSSWNDYLGLATLITRA). The interval 57-94 (SDRGSPHEGPGPTAAGPTMGPPEDDEDDDGEEPEAGGR) is disordered. Residues 78–90 (PEDDEDDDGEEPE) show a composition bias toward acidic residues. The Nanos-type zinc finger occupies 188–242 (VCVFCRNNKEAVALYTTHILKGPDGRVLCPVLRRYTCPLCGASGDNAHTIKYCPL). Positions 189, 192, 205, 216, 224, 227, 235, and 240 each coordinate Zn(2+). 2 short sequence motifs (C2HC) span residues 189 to 216 (CVFC…RVLC) and 224 to 240 (CPLC…IKYC). Residues 243 to 267 (SKVPPPTVRPPPRSNRDSLPSKKLR) are disordered. The segment covering 244–255 (KVPPPTVRPPPR) has biased composition (pro residues). Positions 256–267 (SNRDSLPSKKLR) are enriched in basic and acidic residues.

Belongs to the nanos family. Interacts with PUM2, SNAPIN and CTNNB1. Interacts (via N-terminal region) with CTNND1. Interacts with DDX20 (via N-terminal region). Expressed in the oocyte. Transiently expressed in eight-cell embryos. At 12.5 dpc, it is re-expressed in the central nervous system and the expression continues in the adult brain, in which the hippocampal formation is the predominant region. Expressed in the seminiferous tubules of mature testis, but not in the primordial germ cells.

It is found in the cytoplasm. The protein resides in the perinuclear region. Functionally, may act as a translational repressor which regulates translation of specific mRNAs by forming a complex with PUM2 that associates with the 3'-UTR of mRNA targets. Capable of interfering with the proadhesive and anti-invasive functions of E-cadherin. Up-regulates the production of MMP14 to promote tumor cell invasion. Not essential for normal development. The sequence is that of Nanos homolog 1 (Nanos1) from Mus musculus (Mouse).